A 304-amino-acid polypeptide reads, in one-letter code: Bifunctional protein FolD 3 (304 aa).

NADP(+) contacts are provided by residues 172–174, Ser-197, and Ile-238; that span reads GRS.

This sequence belongs to the tetrahydrofolate dehydrogenase/cyclohydrolase family. In terms of assembly, homodimer.

It catalyses the reaction (6R)-5,10-methylene-5,6,7,8-tetrahydrofolate + NADP(+) = (6R)-5,10-methenyltetrahydrofolate + NADPH. The catalysed reaction is (6R)-5,10-methenyltetrahydrofolate + H2O = (6R)-10-formyltetrahydrofolate + H(+). Its pathway is one-carbon metabolism; tetrahydrofolate interconversion. Catalyzes the oxidation of 5,10-methylenetetrahydrofolate to 5,10-methenyltetrahydrofolate and then the hydrolysis of 5,10-methenyltetrahydrofolate to 10-formyltetrahydrofolate. The chain is Bifunctional protein FolD 3 from Rhizorhabdus wittichii (strain DSM 6014 / CCUG 31198 / JCM 15750 / NBRC 105917 / EY 4224 / RW1) (Sphingomonas wittichii).